Reading from the N-terminus, the 342-residue chain is MTNLTLALDAMGGDFGPRITVPATLQALRLNPLLKIVLVGDKSQIDEHLVSAEPAIKNRIEIKHTTEVVAMSDRPVHALRNRKQSSMRLAIELVRDGKAQACLSAGNTGALMAMSKVLLKTLPGIDRPALVTCLPAVNNTPVYLLDLGANISCDSETLFQFAVMGSVLSETVDKTASPKVALLNVGIEEIKGNDQVQQAGQLLQQIPQINYTGFIEGDEIYSGNVDVIVCDGFVGNITLKTSEGIARLLVHQLKKALGQGFFVRLLAKIIAPRIRSLLNQMNPDHYNGASLIGLRGIVVKSHGCADEAAFLQAITLAVTEAQRRLPQMIEDRLESILLDINS.

The protein belongs to the PlsX family. As to quaternary structure, homodimer. Probably interacts with PlsY.

It localises to the cytoplasm. The catalysed reaction is a fatty acyl-[ACP] + phosphate = an acyl phosphate + holo-[ACP]. It participates in lipid metabolism; phospholipid metabolism. Catalyzes the reversible formation of acyl-phosphate (acyl-PO(4)) from acyl-[acyl-carrier-protein] (acyl-ACP). This enzyme utilizes acyl-ACP as fatty acyl donor, but not acyl-CoA. The sequence is that of Phosphate acyltransferase from Shewanella halifaxensis (strain HAW-EB4).